The primary structure comprises 558 residues: Undecaprenyl phosphate-alpha-4-amino-4-deoxy-L-arabinose arabinosyl transferase 1 (558 aa).

Helical transmembrane passes span 4–24 (GAGLWLGLLAVFFVLTYLVPL), 87–107 (FASVFSTGLSALLVFTVSWTV), 115–135 (LLAALIFLSLLLVFGVGTYSV), 136–156 (LDPMIALWLNAAMAAHVFALR), 178–198 (FMTKGFLALVVPAIAVLPVAL), 207–227 (LGYGALAALLAVLVNLPWALA), 257–277 (APFWFYLPVLALGSLPWLGLL), 295–315 (FLLLCWVVMPLLFFSVAKGKL), 316–336 (LTYILPCMAPLALLLAAYGRE), 355–375 (AFALCAIVALLLAGSGLLPWA), 383–403 (WPRIVIGTLVFAGWLCFAAVS), and 411–431 (WALAAFCPLLLSLLVGQIIPQ).

This sequence belongs to the glycosyltransferase 83 family.

The protein resides in the cell inner membrane. The enzyme catalyses 4-amino-4-deoxy-alpha-L-arabinopyranosyl di-trans,octa-cis-undecaprenyl phosphate + lipid IVA = lipid IIA + di-trans,octa-cis-undecaprenyl phosphate.. It functions in the pathway lipopolysaccharide metabolism; 4-amino-4-deoxy-beta-L-arabinose-lipid A biosynthesis. Functionally, catalyzes the transfer of the L-Ara4N moiety of the glycolipid undecaprenyl phosphate-alpha-L-Ara4N to lipid A. The modified arabinose is attached to lipid A and is required for resistance to polymyxin and cationic antimicrobial peptides. The polypeptide is Undecaprenyl phosphate-alpha-4-amino-4-deoxy-L-arabinose arabinosyl transferase 1 (Sodalis glossinidius (strain morsitans)).